A 269-amino-acid chain; its full sequence is 5'-nucleotidase SurE (269 aa).

A divalent metal cation-binding residues include Asp-11, Asp-12, Ser-43, and Asn-101.

The protein belongs to the SurE nucleotidase family. A divalent metal cation serves as cofactor.

The protein localises to the cytoplasm. The enzyme catalyses a ribonucleoside 5'-phosphate + H2O = a ribonucleoside + phosphate. Functionally, nucleotidase that shows phosphatase activity on nucleoside 5'-monophosphates. The protein is 5'-nucleotidase SurE of Prochlorococcus marinus (strain MIT 9313).